Reading from the N-terminus, the 746-residue chain is MQAKKRYFILLSAGSCLALLFYFGGLQFRASRSHSRREEHSGRNGLHHPSPDHFWPRFPDALRPFVPWDQLENEDSSVHISPRQKRDANSSIYKGKKCRMESCFDFTLCKKNGFKVYVYPQQKGEKIAESYQNILAAIEGSRFYTSDPSQACLFVLSLDTLDRDQLSPQYVHNLRSKVQSLHLWNNGRNHLIFNLYSGTWPDYTEDVGFDIGQAMLAKASISTENFRPNFDVSIPLFSKDHPRTGGERGFLKFNTIPPLRKYMLVFKGKRYLTGIGSDTRNALYHVHNGEDVVLLTTCKHGKDWQKHKDSRCDRDNTEYEKYDYREMLHNATFCLVPRGRRLGSFRFLEALQAACVPVMLSNGWELPFSEVINWNQAAVIGDERLLLQIPSTIRSIHQDKILALRQQTQFLWEAYFSSVEKIVLTTLEIIQDRIFKHISRNSLIWNKHPGGLFVLPQYSSYLGDFPYYYANLGLKPPSKFTAVIHAVTPLVSQSQPVLKLLVAAAKSQYCAQIIVLWNCDKPLPAKHRWPATAVPVIVIEGESKVMSSRFLPYDNIITDAVLSLDEDTVLSTTEVDFAFTVWQSFPERIVGYPARSHFWDNSKERWGYTSKWTNDYSMVLTGAAIYHKYYHYLYSHYLPASLKNMVDQLANCEDILMNFLVSAVTKLPPIKVTQKKQYKETMMGQTSRASRWADPDHFAQRQSCMNTFASWFGYMPLIHSQMRLDPVLFKDQVSILRKKYRDIERL.

The Cytoplasmic portion of the chain corresponds to 1–7 (MQAKKRY). Residues 8–28 (FILLSAGSCLALLFYFGGLQF) traverse the membrane as a helical; Signal-anchor for type II membrane protein segment. Residues 29-746 (RASRSHSRRE…RKKYRDIERL (718 aa)) lie on the Lumenal side of the membrane. Residue Asn-89 is glycosylated (N-linked (GlcNAc...) asparagine). 2 cysteine pairs are disulfide-bonded: Cys-98–Cys-103 and Cys-109–Cys-152. A protein-binding residues include Leu-166 and Tyr-203. UDP-binding residues include Lys-267, Lys-269, Tyr-271, and Arg-280. Cys-298 and Cys-312 are oxidised to a cystine. An a protein-binding site is contributed by His-300. Residues Tyr-319 and Tyr-324 each coordinate UDP. A glycan (N-linked (GlcNAc...) asparagine) is linked at Asn-330. Cystine bridges form between Cys-334/Cys-355 and Cys-652/Cys-704. 2 residues coordinate UDP: Arg-346 and Glu-349.

This sequence belongs to the glycosyltransferase 47 family. As to quaternary structure, part of the heparan sulfate polymerase, a dimeric complex composed of EXT1 and EXT2. Could also form homooligomeric complexes. Interacts with NDST1. Post-translationally, N-glycosylated.

The protein resides in the golgi apparatus membrane. It localises to the golgi apparatus. The protein localises to the cis-Golgi network membrane. It is found in the endoplasmic reticulum membrane. It carries out the reaction 3-O-{alpha-D-GlcNAc-[(1-&gt;4)-beta-D-GlcA-(1-&gt;4)-alpha-D-GlcNAc](n)-(1-&gt;4)-beta-D-GlcA-(1-&gt;3)-beta-D-Gal-(1-&gt;3)-beta-D-Gal-(1-&gt;4)-beta-D-Xyl}-L-seryl-[protein] + UDP-alpha-D-glucuronate = 3-O-{[(1-&gt;4)-beta-D-GlcA-(1-&gt;4)-alpha-D-GlcNAc](n+1)-(1-&gt;4)-beta-D-GlcA-(1-&gt;3)-beta-D-Gal-(1-&gt;3)-beta-D-Gal-(1-&gt;4)-beta-D-Xyl}-L-seryl-[protein] + UDP + H(+). It functions in the pathway protein modification; protein glycosylation. Its function is as follows. Glycosyltransferase forming with EXT2 the heterodimeric heparan sulfate polymerase which catalyzes the elongation of the heparan sulfate glycan backbone. Glycan backbone extension consists in the alternating transfer of (1-&gt;4)-beta-D-GlcA and (1-&gt;4)-alpha-D-GlcNAc residues from their respective UDP-sugar donors. Both EXT1 and EXT2 are required for the full activity of the polymerase since EXT1 bears the N-acetylglucosaminyl-proteoglycan 4-beta-glucuronosyltransferase activity within the complex while EXT2 carries the glucuronosyl-N-acetylglucosaminyl-proteoglycan 4-alpha-N-acetylglucosaminyltransferase activity. Heparan sulfate proteoglycans are ubiquitous components of the extracellular matrix and play an important role in tissue homeostasis and signaling. The chain is Exostosin-1 (EXT1) from Papio anubis (Olive baboon).